We begin with the raw amino-acid sequence, 85 residues long: UPF0386 protein HNE_3437 (85 aa).

It belongs to the UPF0386 family.

In Hyphomonas neptunium (strain ATCC 15444), this protein is UPF0386 protein HNE_3437.